A 181-amino-acid chain; its full sequence is 6,7-dimethyl-8-ribityllumazine synthase (181 aa).

5-amino-6-(D-ribitylamino)uracil-binding positions include phenylalanine 23, 61-63 (SFE), and 85-87 (AVI). 90 to 91 (QT) is a binding site for (2S)-2-hydroxy-3-oxobutyl phosphate. Residue histidine 93 is the Proton donor of the active site. Phenylalanine 118 contributes to the 5-amino-6-(D-ribitylamino)uracil binding site. Arginine 132 is a (2S)-2-hydroxy-3-oxobutyl phosphate binding site.

The protein belongs to the DMRL synthase family.

The enzyme catalyses (2S)-2-hydroxy-3-oxobutyl phosphate + 5-amino-6-(D-ribitylamino)uracil = 6,7-dimethyl-8-(1-D-ribityl)lumazine + phosphate + 2 H2O + H(+). It participates in cofactor biosynthesis; riboflavin biosynthesis; riboflavin from 2-hydroxy-3-oxobutyl phosphate and 5-amino-6-(D-ribitylamino)uracil: step 1/2. In terms of biological role, catalyzes the formation of 6,7-dimethyl-8-ribityllumazine by condensation of 5-amino-6-(D-ribitylamino)uracil with 3,4-dihydroxy-2-butanone 4-phosphate. This is the penultimate step in the biosynthesis of riboflavin. This Synechococcus elongatus (strain ATCC 33912 / PCC 7942 / FACHB-805) (Anacystis nidulans R2) protein is 6,7-dimethyl-8-ribityllumazine synthase.